Reading from the N-terminus, the 274-residue chain is Urease accessory protein UreD (274 aa).

Belongs to the UreD family. UreD, UreF and UreG form a complex that acts as a GTP-hydrolysis-dependent molecular chaperone, activating the urease apoprotein by helping to assemble the nickel containing metallocenter of UreC. The UreE protein probably delivers the nickel.

It is found in the cytoplasm. Its function is as follows. Required for maturation of urease via the functional incorporation of the urease nickel metallocenter. This chain is Urease accessory protein UreD, found in Enterobacter sp. (strain 638).